A 77-amino-acid polypeptide reads, in one-letter code: DNA-directed RNA polymerase subunit omega (77 aa).

The protein belongs to the RNA polymerase subunit omega family. The RNAP catalytic core consists of 2 alpha, 1 beta, 1 beta' and 1 omega subunit. When a sigma factor is associated with the core the holoenzyme is formed, which can initiate transcription.

It catalyses the reaction RNA(n) + a ribonucleoside 5'-triphosphate = RNA(n+1) + diphosphate. Promotes RNA polymerase assembly. Latches the N- and C-terminal regions of the beta' subunit thereby facilitating its interaction with the beta and alpha subunits. The protein is DNA-directed RNA polymerase subunit omega of Dichelobacter nodosus (strain VCS1703A).